A 228-amino-acid polypeptide reads, in one-letter code: Ribonuclease 3 (228 aa).

The RNase III domain maps to 7 to 132; sequence LSAFMDRLGH…VIAAVYLDAG (126 aa). Position 45 (Glu-45) interacts with Mg(2+). Residue Asp-49 is part of the active site. 2 residues coordinate Mg(2+): Asp-118 and Glu-121. Residue Glu-121 is part of the active site. The DRBM domain maps to 157-226; it reads DPKTALQEWA…AKALLERLER (70 aa).

This sequence belongs to the ribonuclease III family. In terms of assembly, homodimer. The cofactor is Mg(2+).

The protein resides in the cytoplasm. It carries out the reaction Endonucleolytic cleavage to 5'-phosphomonoester.. Digests double-stranded RNA. Involved in the processing of ribosomal RNA precursors and of some mRNAs. Complements an E.coli disruption mutant, but the E.coli enzyme does not cleave R.capsulatus rRNA precursor, showing substrate recognition is different. Probably also processes some mRNAs, and tRNAs when they are encoded in the rRNA operon. Probably processes pre-crRNA and tracrRNA of type II CRISPR loci if present in the organism. The polypeptide is Ribonuclease 3 (rnc) (Rhodobacter capsulatus (Rhodopseudomonas capsulata)).